Consider the following 770-residue polypeptide: Transducin-like enhancer protein 1 (770 aa).

Positions 1 to 131 are q domain; that stretch reads MFPQSRHPTP…IIGQQQLQAQ (131 aa). Disordered stretches follow at residues 128–157 and 176–346; these read LQAQHLSHGHGPPVPLTPHPSGLQPPGIPP and HLAI…PAME. A GP domain region spans residues 132-199; the sequence is HLSHGHGPPV…RHRDRESGTS (68 aa). The span at 146–157 shows a compositional bias: low complexity; the sequence is HPSGLQPPGIPP. Basic and acidic residues-rich tracts occupy residues 178 to 196 and 209 to 244; these read AIKDDKKHHDAERHRDRES and RSTDKRRNGPEFSSDIKKRKVDDKDNYDSDGDKSDD. The tract at residues 200–266 is ccN domain; it reads NSLLVPDSLR…SPHASPTHSP (67 aa). The short motif at 225-228 is the Nuclear localization signal element; it reads KKRK. At Ser-237 the chain carries Phosphoserine; by CK2. Positions 255–264 are enriched in low complexity; the sequence is PSSPHASPTH. Phosphoserine; by CDK1 occurs at positions 257, 261, and 265. Residues 265–281 show a composition bias toward basic and acidic residues; it reads SPRENGIDKNRLLKKDA. The interval 267 to 450 is SP domain; the sequence is RENGIDKNRL…GGKPAYSFHV (184 aa). The span at 282 to 297 shows a compositional bias: low complexity; the sequence is SGSPASTASSGSSSSL. Position 284 is a phosphoserine (Ser-284). A compositionally biased stretch (basic and acidic residues) spans 298-308; the sequence is KSKEVSLHEKA. 6 WD repeats span residues 470 to 501, 528 to 558, 572 to 602, 614 to 644, 696 to 726, and 737 to 767; these read GIPRHARQINTLNHGEVVCAVTISNPTRHVYT, NRDNYIRSCKLLPDGCTLIVGGEASTLSIWD, SSAPACYALAISPDSKVCFSCCSDGNIAVWD, GHTDGASCIDISNDGTKLWTGGLDNTVRSWD, LHESCVLSLKFAYCGKWFVSTGKDNLLNAWR, and KESSSVLSCDISVDDKYIVTGSGDKKATVYE.

This sequence belongs to the WD repeat Groucho/TLE family. In terms of assembly, homooligomer and heterooligomer with other family members. Binds RUNX1, RUNX3, FOXA2, KDM6A, UTY, histone H3, HESX1, ESRRG and the NF-kappa-B subunit RELA. Interacts with HES1 (via WRPW motif). Binds TCF7, LEF1, TCF7L1 and TCF7L2. Interacts with SIX3. Interacts with EFNB1. Interacts with TLE4. Interacts with FOXG1/BF-1; the interaction is inhibited by TLE6/GRG6. Phosphorylated, probably by CDK1. The degree of phosphorylation varies throughout the cell cycle, and is highest at the G2/M transition. Becomes hyperphosphorylated in response to cell differentiation and interaction with HES1 or RUNX1. In terms of processing, ubiquitinated by XIAP/BIRC4. As to expression, highly expressed in liver and lung. Detected at slightly lower levels in heart, brain, kidney and testis. Detected in fetal and adult stomach and small intestine, in adult ileum, duodenum and colon. Expressed in bone marrow-derived macrophages. In terms of tissue distribution, most abundant at the base of the crypts of Lieberkuhn in the small intestine.

It is found in the nucleus. It localises to the cytoplasm. Functionally, transcriptional corepressor that binds to a number of transcription factors. Inhibits NF-kappa-B-regulated gene expression. Inhibits the transcriptional activation mediated by FOXA2, and by CTNNB1 and TCF family members in Wnt signaling. Enhances FOXG1/BF-1- and HES1-mediated transcriptional repression. The effects of full-length TLE family members may be modulated by association with dominant-negative AES. Unusual function as coactivator for ESRRG. This is Transducin-like enhancer protein 1 (Tle1) from Mus musculus (Mouse).